The primary structure comprises 264 residues: Thymidylate synthase (264 aa).

Arginine 21 is a binding site for dUMP. Histidine 51 serves as a coordination point for (6R)-5,10-methylene-5,6,7,8-tetrahydrofolate. 126-127 contributes to the dUMP binding site; it reads RR. Cysteine 146 (nucleophile) is an active-site residue. Residues 166–169, asparagine 177, and 207–209 each bind dUMP; these read RSAD and HIY. Aspartate 169 serves as a coordination point for (6R)-5,10-methylene-5,6,7,8-tetrahydrofolate. Residue alanine 263 participates in (6R)-5,10-methylene-5,6,7,8-tetrahydrofolate binding.

Belongs to the thymidylate synthase family. Bacterial-type ThyA subfamily. Homodimer.

Its subcellular location is the cytoplasm. It catalyses the reaction dUMP + (6R)-5,10-methylene-5,6,7,8-tetrahydrofolate = 7,8-dihydrofolate + dTMP. It participates in pyrimidine metabolism; dTTP biosynthesis. Its function is as follows. Catalyzes the reductive methylation of 2'-deoxyuridine-5'-monophosphate (dUMP) to 2'-deoxythymidine-5'-monophosphate (dTMP) while utilizing 5,10-methylenetetrahydrofolate (mTHF) as the methyl donor and reductant in the reaction, yielding dihydrofolate (DHF) as a by-product. This enzymatic reaction provides an intracellular de novo source of dTMP, an essential precursor for DNA biosynthesis. This is Thymidylate synthase from Coxiella burnetii (strain Dugway 5J108-111).